The following is a 396-amino-acid chain: Acetate kinase (396 aa).

N8 contributes to the Mg(2+) binding site. K15 contributes to the ATP binding site. R90 is a binding site for substrate. D147 (proton donor/acceptor) is an active-site residue. Residues 207–211 (HLGSG), 283–285 (DMR), and 330–334 (GIGEN) contribute to the ATP site. E384 provides a ligand contact to Mg(2+).

It belongs to the acetokinase family. Homodimer. The cofactor is Mg(2+). It depends on Mn(2+) as a cofactor.

The protein resides in the cytoplasm. It catalyses the reaction acetate + ATP = acetyl phosphate + ADP. Its pathway is metabolic intermediate biosynthesis; acetyl-CoA biosynthesis; acetyl-CoA from acetate: step 1/2. Functionally, catalyzes the formation of acetyl phosphate from acetate and ATP. Can also catalyze the reverse reaction. In Lacticaseibacillus paracasei (strain ATCC 334 / BCRC 17002 / CCUG 31169 / CIP 107868 / KCTC 3260 / NRRL B-441) (Lactobacillus paracasei), this protein is Acetate kinase.